The following is a 415-amino-acid chain: UDP-N-acetylmuramoylalanine--D-glutamate ligase (415 aa).

G91–T97 lines the ATP pocket.

Belongs to the MurCDEF family.

It localises to the cytoplasm. The catalysed reaction is UDP-N-acetyl-alpha-D-muramoyl-L-alanine + D-glutamate + ATP = UDP-N-acetyl-alpha-D-muramoyl-L-alanyl-D-glutamate + ADP + phosphate + H(+). It functions in the pathway cell wall biogenesis; peptidoglycan biosynthesis. Functionally, cell wall formation. Catalyzes the addition of glutamate to the nucleotide precursor UDP-N-acetylmuramoyl-L-alanine (UMA). The sequence is that of UDP-N-acetylmuramoylalanine--D-glutamate ligase from Aquifex aeolicus (strain VF5).